A 362-amino-acid chain; its full sequence is HMG box-containing protein C19G7.04 (362 aa).

A SprT-like domain is found at 135–299; it reads KCFLARLEDE…RLCKSQIKQI (165 aa). Residues 306–348 constitute a DNA-binding region (HMG box); it reads PNAFQIFLKENSKRLRKLHPHITHKELMKKLSDEYHRTKDAKQ.

It is found in the nucleus. The protein localises to the cytoplasm. Its subcellular location is the cytoskeleton. The protein resides in the spindle. This is HMG box-containing protein C19G7.04 from Schizosaccharomyces pombe (strain 972 / ATCC 24843) (Fission yeast).